An 80-amino-acid polypeptide reads, in one-letter code: Exodeoxyribonuclease 7 small subunit (80 aa).

The protein belongs to the XseB family. Heterooligomer composed of large and small subunits.

The protein localises to the cytoplasm. The catalysed reaction is Exonucleolytic cleavage in either 5'- to 3'- or 3'- to 5'-direction to yield nucleoside 5'-phosphates.. In terms of biological role, bidirectionally degrades single-stranded DNA into large acid-insoluble oligonucleotides, which are then degraded further into small acid-soluble oligonucleotides. This chain is Exodeoxyribonuclease 7 small subunit, found in Rickettsia bellii (strain OSU 85-389).